Here is a 496-residue protein sequence, read N- to C-terminus: Glutamyl-tRNA(Gln) amidotransferase subunit A (496 aa).

Active-site charge relay system residues include Lys75 and Ser150. Ser174 (acyl-ester intermediate) is an active-site residue.

This sequence belongs to the amidase family. GatA subfamily. As to quaternary structure, heterotrimer of A, B and C subunits.

It carries out the reaction L-glutamyl-tRNA(Gln) + L-glutamine + ATP + H2O = L-glutaminyl-tRNA(Gln) + L-glutamate + ADP + phosphate + H(+). Functionally, allows the formation of correctly charged Gln-tRNA(Gln) through the transamidation of misacylated Glu-tRNA(Gln) in organisms which lack glutaminyl-tRNA synthetase. The reaction takes place in the presence of glutamine and ATP through an activated gamma-phospho-Glu-tRNA(Gln). The chain is Glutamyl-tRNA(Gln) amidotransferase subunit A from Burkholderia ambifaria (strain MC40-6).